Consider the following 370-residue polypeptide: 4-hydroxy-3-methylbut-2-en-1-yl diphosphate synthase (flavodoxin) (370 aa).

[4Fe-4S] cluster-binding residues include cysteine 268, cysteine 271, cysteine 303, and glutamate 310.

This sequence belongs to the IspG family. It depends on [4Fe-4S] cluster as a cofactor.

It catalyses the reaction (2E)-4-hydroxy-3-methylbut-2-enyl diphosphate + oxidized [flavodoxin] + H2O + 2 H(+) = 2-C-methyl-D-erythritol 2,4-cyclic diphosphate + reduced [flavodoxin]. It functions in the pathway isoprenoid biosynthesis; isopentenyl diphosphate biosynthesis via DXP pathway; isopentenyl diphosphate from 1-deoxy-D-xylulose 5-phosphate: step 5/6. Its function is as follows. Converts 2C-methyl-D-erythritol 2,4-cyclodiphosphate (ME-2,4cPP) into 1-hydroxy-2-methyl-2-(E)-butenyl 4-diphosphate. This Bacillus pumilus (strain SAFR-032) protein is 4-hydroxy-3-methylbut-2-en-1-yl diphosphate synthase (flavodoxin).